Here is a 1175-residue protein sequence, read N- to C-terminus: MKTRQNKDSMSMRSGRKKEAPGPREELRSRGRASPGGVSTSSSDGKAEKSRQTAKKARIEEPSAPKASKQGRSEEISESESEETSAPKKTKTEQELPRPQSPSDLDSLDGRSINDDGSSDPRDIDQDNRSTSPSIYSPGSVENDSDSSSGLSQGPARPYHPPPLFPPSPPPPDSTPRQPESGFEPHPSVPPTGYHAPMEPPTSRLFQGPPPGAPPTHPQLYPGNASGGVLSGPPMGPKGGAAASSVGAPSGGKQHPPPTTPIPISSSGASGAPPAKPPSAPVGGGSLPSAPPPASFPHVTPNLPPPPALRPLNNASASPPGMGAQPIPGHLPSPHAMGQGMSGLPPGPEKGPTLAPSPHPLPPASSSAPGPPMRYPYSSSSSSAAASSSSSSSSASQYPASQALPSYPHSFPPPTSMSVSNQPPKYTQPSLPSQAVWSQGPPPPPPYGRLLANNNTHPGPFPPTGGQSTAHPAAPTHHHHQQQPQQQHHHGNSGPPPPGAYPHPLESSNSHHAHPYNMSPSLGSLRPYPPGPAHLPPPHGQVSYNQAGPNGPPVSSSNSSGSSSQASYSCSHPSSSQGPQGASYPFPPVPPVTTSSATLSTVIATVASSPAGYKTASPPGPPQYSKRAPSPGSYKTATPPGYKPGSPPSFRTGTPPGYRGTSPPAGPGTFKPGSPTVGPGPLPPAGPSSLSSLPPPPAAPTTGPPLTATQIKQEPAEEYEPPESPVPPARSPSPPPKVVDVPSHASQSARFNKHLDRGFNSCARSDLYFVPLEGSKLAKKRADLVEKVRREAEQRAREEKEREREREREKEREREKERELERSVKLAQEGRAPVECPSLGPVPHRPPFEPGSAVATVPPYLGPDTPALRTLSEYARPHVMSPGNRNHPFYVPLGAVDPGLLGYNVPALYSSDPAAREREREARERDLRDRLKPGFEVKPSELEPLHGVPGPGLDPFPRHGGLALQPGPPGLHPFPFHPSLGPLERERLALAAGPALRPDMSYAERLAAERQHAERVAALGNDPLARLQMLNVTPHHHQHSHIHSHLHLHQQDAIHAASASVHPLIDPLASGSHLTRIPYPAGTLPNPLLPHPLHENEVLRHQLFAAPYRDLPASLSAPMSAAHQLQAMHAQSAELQRLALEQQQWLHAHHPLHSVPLPAQEDYYSHLKKESDKPL.

Disordered regions lie at residues 1–595 (MKTR…VTTS), 608–752 (SSPA…ARFN), and 770–847 (VPLE…HRPP). The Nuclear localization signal motif lies at 16 to 32 (RKKEAPGPREELRSRGR). A compositionally biased stretch (basic and acidic residues) spans 17-29 (KKEAPGPREELRS). A Phosphoserine modification is found at S34. The span at 45–63 (GKAEKSRQTAKKARIEEPS) shows a compositional bias: basic and acidic residues. A phosphoserine mark is found at S77, S79, S101, S103, and S107. The span at 108-128 (LDGRSINDDGSSDPRDIDQDN) shows a compositional bias: basic and acidic residues. Over residues 129 to 152 (RSTSPSIYSPGSVENDSDSSSGLS) the composition is skewed to polar residues. Composition is skewed to pro residues over residues 158 to 174 (PYHP…PPDS) and 208 to 217 (GPPPGAPPTH). 2 stretches are compositionally biased toward low complexity: residues 240 to 253 (GAAA…SGGK) and 262 to 273 (IPISSSGASGAP). Residues 345–374 (PPGPEKGPTLAPSPHPLPPASSSAPGPPMR) are compositionally biased toward pro residues. A compositionally biased stretch (low complexity) spans 378–396 (SSSSSSAAASSSSSSSSAS). Residues 416-437 (SMSVSNQPPKYTQPSLPSQAVW) are compositionally biased toward polar residues. Over residues 476–491 (THHHHQQQPQQQHHHG) the composition is skewed to basic residues. The interval 503–553 (HPLESSNSHHAHPYNMSPSLGSLRPYPPGPAHLPPPHGQVSYNQAGPNGPP) is involved in binding BAIAP2. Pro residues predominate over residues 527-539 (PYPPGPAHLPPPH). A compositionally biased stretch (low complexity) spans 547-584 (AGPNGPPVSSSNSSGSSSQASYSCSHPSSSQGPQGASY). S617 carries the phosphoserine modification. Residue K626 is modified to N6-acetyllysine. T638 bears the Phosphothreonine mark. S646 bears the Phosphoserine mark. The residue at position 654 (T654) is a Phosphothreonine. Pro residues-rich tracts occupy residues 693–703 (LPPPPAAPTTG) and 722–737 (PESP…PPPK). Phosphoserine; by MAPK8 is present on S724. S731 and S733 each carry phosphoserine. Positions 780-824 (KRADLVEKVRREAEQRAREEKEREREREREKEREREKERELERSV) are enriched in basic and acidic residues. The segment at 864-879 (DTPALRTLSEYARPHV) is required for interaction with FAT1. S881 carries the phosphoserine modification. The disordered stretch occupies residues 913 to 932 (PAAREREREARERDLRDRLK). The span at 914 to 932 (AAREREREARERDLRDRLK) shows a compositional bias: basic and acidic residues. The Nuclear export signal signature appears at 1018-1026 (ALGNDPLAR). Position 1100 is an asymmetric dimethylarginine (R1100). A Glycyl lysine isopeptide (Lys-Gly) (interchain with G-Cter in SUMO2) cross-link involves residue K1168.

In terms of assembly, interacts with BAIAP2, WWP1, WWP2, WWP3 and RERE. Interacts (via its N-terminus) with MTG8; the interaction enhances transcriptional repression of MTG8. Interacts with PQBP1. Interacts with NR2E1; the interaction represses the transcriptional activity of NR2E1. Interacts with FAT1 (via a C-terminal domain). In terms of processing, phosphorylated in vitro by MAPK8/JNK1 on Ser-724. Widely expressed. Most abundant in the brain.

The protein resides in the cytoplasm. Its subcellular location is the perinuclear region. The protein localises to the cell junction. It localises to the nucleus. Its function is as follows. Transcriptional corepressor. Corepressor of MTG8 transcriptional repression. Has some intrinsic repression activity which is independent of the number of the poly-Q repeats. Recruits NR2E1 to repress transcription. Promotes vascular smooth cell (VSMC) migration and orientation. This Mus musculus (Mouse) protein is Atrophin-1 (Atn1).